The primary structure comprises 352 residues: C-X-C chemokine receptor type 4 (352 aa).

Positions 1 to 21 (MEGISIYTSDNYTEEMGSGDY) are important for chemokine binding and signaling. At 1 to 38 (MEGISIYTSDNYTEEMGSGDYDSIKEPCFREENAHFNR) the chain is on the extracellular side. The residue at position 7 (tyrosine 7) is a Sulfotyrosine. Residue asparagine 11 is glycosylated (N-linked (GlcNAc...) asparagine). Sulfotyrosine is present on tyrosine 12. Residue serine 18 is glycosylated (O-linked (Xyl...) (chondroitin sulfate) serine). Tyrosine 21 is modified (sulfotyrosine). Disulfide bonds link cysteine 28–cysteine 274 and cysteine 109–cysteine 186. A helical membrane pass occupies residues 39–63 (IFLPTIYSIIFLTGIVGNGLVILVM). The Cytoplasmic portion of the chain corresponds to 64–77 (GYQKKLRSMTDKYR). Residues 78 to 99 (LHLSVADLLFVITLPFWAVDAV) form a helical membrane-spanning segment. Positions 94-97 (WAVD) are chemokine binding. Residues 100–110 (ANWYFGNFLCK) lie on the Extracellular side of the membrane. The chain crosses the membrane as a helical span at residues 111–130 (AVHVIYTVNLYSSVLILAFI). The chemokine binding stretch occupies residues 113-117 (HVIYT). Over 131 to 154 (SLDRYLAIVHATNSQKPRKLLAEK) the chain is Cytoplasmic. Positions 133 to 135 (DRY) match the Important for signaling motif. The interval 135–147 (YLAIVHATNSQKP) is involved in dimerization; when bound to chemokine. Residues 155–174 (VVYVGVWIPALLLTIPDFIF) traverse the membrane as a helical segment. The Extracellular segment spans residues 175–195 (ASVSEADDRYICDRFYPNDLW). The interval 186-190 (CDRFY) is chemokine binding, important for signaling. The tract at residues 191–210 (PNDLWVVVFQFQHIMVGLIL) is involved in dimerization. A helical membrane pass occupies residues 196-216 (VVVFQFQHIMVGLILPGIDIL). Residues 217–241 (SCYCIIISKLSHSKGHQKRKALKTT) lie on the Cytoplasmic side of the membrane. A helical transmembrane segment spans residues 242 to 261 (VILILAFFACWLPYYIGISI). Residues 262-282 (DSFILLEIIKQGCEFENTVHK) lie on the Extracellular side of the membrane. An involved in dimerization region spans residues 266-268 (LLE). A helical membrane pass occupies residues 283–302 (WISITEALAFFHCCLNPILY). Residues 303 to 352 (AFLGAKFKTSAQHALTSVSRGSSLKILSKGKRGGHSSVSTESESSSFHSS) lie on the Cytoplasmic side of the membrane. A phosphoserine mark is found at serine 319 and serine 321. 2 positions are modified to phosphoserine; by PKC and GRK6: serine 324 and serine 325. The tract at residues 329–352 (LSKGKRGGHSSVSTESESSSFHSS) is disordered. Phosphoserine; by GRK6 is present on serine 330. Residue lysine 331 forms a Glycyl lysine isopeptide (Lys-Gly) (interchain with G-Cter in ubiquitin) linkage. Low complexity predominate over residues 337 to 352 (HSSVSTESESSSFHSS). Serine 339 carries the phosphoserine; by GRK6 modification. 2 positions are modified to phosphoserine: serine 348 and serine 351.

This sequence belongs to the G-protein coupled receptor 1 family. As to quaternary structure, monomer. Can form homodimers. Interacts with CD164. Interacts with ARRB2; the interaction is dependent on the C-terminal phosphorylation of CXCR4 and allows activation of MAPK1 and MAPK3. Interacts with ARR3; the interaction is dependent on the C-terminal phosphorylation of CXCR4 and modulates calcium mobilization. Interacts with RNF113A; the interaction, enhanced by CXCL12, promotes CXCR4 ubiquitination and subsequent degradation. Interacts (via the cytoplasmic C-terminal) with ITCH (via the WW domains I and II); the interaction, enhanced by CXCL12, promotes CXCR4 ubiquitination and leads to its degradation. Interacts with extracellular ubiquitin. Interacts with DBN1; this interaction is enhanced by antigenic stimulation. Following LPS binding, may form a complex with GDF5, HSP90AA1 and HSPA8. In terms of processing, phosphorylated on agonist stimulation. Rapidly phosphorylated on serine and threonine residues in the C-terminal. Phosphorylation at Ser-324 and Ser-325 leads to recruitment of ITCH, ubiquitination and protein degradation. Post-translationally, ubiquitinated after ligand binding, leading to its degradation. Ubiquitinated by ITCH at the cell membrane on agonist stimulation. The ubiquitin-dependent mechanism, endosomal sorting complex required for transport (ESCRT), then targets CXCR4 for lysosomal degradation. This process is dependent also on prior Ser-/Thr-phosphorylation in the C-terminal of CXCR4. Also binding of ARRB1 to STAM negatively regulates CXCR4 sorting to lysosomes though modulating ubiquitination of SFR5S. Sulfation is required for efficient binding of CXCL12/SDF-1alpha and promotes its dimerization. In terms of processing, O- and N-glycosylated. N-glycosylation can mask coreceptor function. The O-glycosylation chondroitin sulfate attachment does not affect interaction with CXCL12/SDF-1alpha nor its coreceptor activity.

It localises to the cell membrane. The protein resides in the cell junction. It is found in the early endosome. Its subcellular location is the late endosome. The protein localises to the lysosome. Its function is as follows. Receptor for the C-X-C chemokine CXCL12/SDF-1 that transduces a signal by increasing intracellular calcium ion levels and enhancing MAPK1/MAPK3 activation. Involved in the AKT signaling cascade. Plays a role in regulation of cell migration, e.g. during wound healing. Acts as a receptor for extracellular ubiquitin; leading to enhanced intracellular calcium ions and reduced cellular cAMP levels. Binds bacterial lipopolysaccharide (LPS) et mediates LPS-induced inflammatory response, including TNF secretion by monocytes. Involved in hematopoiesis and in cardiac ventricular septum formation. Also plays an essential role in vascularization of the gastrointestinal tract, probably by regulating vascular branching and/or remodeling processes in endothelial cells. Involved in cerebellar development. In the CNS, could mediate hippocampal-neuron survival. This is C-X-C chemokine receptor type 4 (CXCR4) from Macaca mulatta (Rhesus macaque).